The following is a 970-amino-acid chain: Serine/threonine-protein kinase PLK4 (970 aa).

Residues 12–265 (FKVGNLLGKG…LSSVLDHPFM (254 aa)) form the Protein kinase domain. ATP-binding positions include 18 to 26 (LGKGSFAGV) and K41. An N6-acetyllysine mark is found at K45 and K46. D136 functions as the Proton acceptor in the catalytic mechanism. The interval 324–373 (VFPKNKSSSDFSSSGDGNSFYTQWGNQETSNSGRGRVIQDAEERPHSRYL) is disordered. Over residues 327-343 (KNKSSSDFSSSGDGNSF) the composition is skewed to low complexity. Polar residues predominate over residues 344-356 (YTQWGNQETSNSG). The segment covering 360-369 (VIQDAEERPH) has biased composition (basic and acidic residues). Position 401 is a phosphoserine (S401). A disordered region spans residues 498–540 (ISPTRDFQGHPDLQKDTSKNAWTDTKVKKNSDASDNAHSVKQP). Basic and acidic residues predominate over residues 504-515 (FQGHPDLQKDTS). Residues 530 to 540 (ASDNAHSVKQP) are compositionally biased toward polar residues. The 114-residue stretch at 586–699 (TLRSITSPLV…SRFVQLVRSK (114 aa)) folds into the Cryptic POLO box 1 (CPB1) domain. S665 is modified (phosphoserine). The 114-residue stretch at 700 to 813 (SPKITYFTRY…GRKPGSTSSP (114 aa)) folds into the Cryptic POLO box 2 (CPB2) domain. The interval 808–829 (GSTSSPKALSPPPSVDSNYPTR) is disordered. Residue S817 is modified to Phosphoserine. One can recognise a POLO box domain in the interval 886–964 (QLLKSVFVKN…LSSILLMFSN (79 aa)).

This sequence belongs to the protein kinase superfamily. Ser/Thr protein kinase family. CDC5/Polo subfamily. Homodimer. Interacts with CEP152 (via N-terminus). Interacts with CEP78; this interaction may be important for proper PLK4 localization to the centriole and PLK4-induced overduplication of centrioles. Interacts with CEP131. Interacts simultaneously with TENT5C and CEP192. Interacts with TENT5C; this interaction leads to the TENT5C recruitment in the centrosome. Interacts with CEP85; this interaction may be important in cell migration and centriole assembly. Ubiquitinated; leading to its degradation by the proteasome. Deubiquitinated by USP54; leading to PLK4 stabilization. Post-translationally, tyrosine-phosphorylated by TEC. In terms of processing, acetylation by KAT2A and KAT2B impairs kinase activity by shifting the kinase to an inactive conformation.

It localises to the cytoplasm. It is found in the cytoskeleton. The protein resides in the microtubule organizing center. The protein localises to the centrosome. Its subcellular location is the centriole. It localises to the nucleus. It is found in the nucleolus. The protein resides in the cleavage furrow. It carries out the reaction L-seryl-[protein] + ATP = O-phospho-L-seryl-[protein] + ADP + H(+). The enzyme catalyses L-threonyl-[protein] + ATP = O-phospho-L-threonyl-[protein] + ADP + H(+). Functionally, serine/threonine-protein kinase that plays a central role in centriole duplication. Able to trigger procentriole formation on the surface of the parental centriole cylinder, leading to the recruitment of centriole biogenesis proteins such as SASS6, CPAP, CCP110, CEP135 and gamma-tubulin. When overexpressed, it is able to induce centrosome amplification through the simultaneous generation of multiple procentrioles adjoining each parental centriole during S phase. Phosphorylates 'Ser-151' of FBXW5 during the G1/S transition, leading to inhibit FBXW5 ability to ubiquitinate SASS6. Its central role in centriole replication suggests a possible role in tumorigenesis, centrosome aberrations being frequently observed in tumors. Also involved in deuterosome-mediated centriole amplification in multiciliated that can generate more than 100 centrioles. Also involved in trophoblast differentiation by phosphorylating HAND1, leading to disrupt the interaction between HAND1 and MDFIC and activate HAND1. Phosphorylates CDC25C and CHEK2. Required for the recruitment of STIL to the centriole and for STIL-mediated centriole amplification. Phosphorylates CEP131 and PCM1 which is essential for proper organization and integrity of centriolar satellites. In Pongo abelii (Sumatran orangutan), this protein is Serine/threonine-protein kinase PLK4.